The primary structure comprises 178 residues: Small ribosomal subunit protein uS4 (178 aa).

Residues 104–166 (RRLQTLVYRK…PNSPMALENH (63 aa)) form the S4 RNA-binding domain.

This sequence belongs to the universal ribosomal protein uS4 family. In terms of assembly, part of the 30S ribosomal subunit. Contacts protein S5. The interaction surface between S4 and S5 is involved in control of translational fidelity.

Its function is as follows. One of the primary rRNA binding proteins, it binds directly to 16S rRNA where it nucleates assembly of the body of the 30S subunit. Functionally, with S5 and S12 plays an important role in translational accuracy. In Methanococcus vannielii (strain ATCC 35089 / DSM 1224 / JCM 13029 / OCM 148 / SB), this protein is Small ribosomal subunit protein uS4.